Consider the following 300-residue polypeptide: Cis-3-alkyl-4-alkyloxetan-2-one decarboxylase (300 aa).

Residues 33–282 (VVVMLHGNPS…DDANHYVLED (250 aa)) enclose the AB hydrolase-1 domain.

The protein belongs to the AB hydrolase superfamily. As to quaternary structure, homotetramer. Forms a complex with OleC and OleD.

It is found in the cytoplasm. It carries out the reaction a cis-3-alkyl-4-alkyloxetan-2-one = a cis-alkene + CO2. Functionally, involved in olefin biosynthesis. Catalyzes the elimination of carbon dioxide from beta-lactones to form the final olefin product. In Xanthomonas campestris pv. campestris (strain ATCC 33913 / DSM 3586 / NCPPB 528 / LMG 568 / P 25), this protein is Cis-3-alkyl-4-alkyloxetan-2-one decarboxylase.